The primary structure comprises 375 residues: tRNA-specific 2-thiouridylase MnmA (375 aa).

ATP is bound by residues 12-19 and Met-38; that span reads GMSGGVDS. An interaction with target base in tRNA region spans residues 98-100; that stretch reads NPD. Cys-103 functions as the Nucleophile in the catalytic mechanism. Residues Cys-103 and Cys-200 are joined by a disulfide bond. Residue Gly-127 coordinates ATP. Residues 150–152 are interaction with tRNA; the sequence is KDQ. The Cysteine persulfide intermediate role is filled by Cys-200. The interaction with tRNA stretch occupies residues 312–313; that stretch reads RY.

The protein belongs to the MnmA/TRMU family.

Its subcellular location is the cytoplasm. The enzyme catalyses S-sulfanyl-L-cysteinyl-[protein] + uridine(34) in tRNA + AH2 + ATP = 2-thiouridine(34) in tRNA + L-cysteinyl-[protein] + A + AMP + diphosphate + H(+). Its function is as follows. Catalyzes the 2-thiolation of uridine at the wobble position (U34) of tRNA, leading to the formation of s(2)U34. The chain is tRNA-specific 2-thiouridylase MnmA from Lactobacillus helveticus (strain DPC 4571).